We begin with the raw amino-acid sequence, 197 residues long: Peptide deformylase (197 aa).

Residues cysteine 106 and histidine 148 each coordinate Fe cation. The active site involves glutamate 149. Histidine 152 is a binding site for Fe cation.

The protein belongs to the polypeptide deformylase family. Requires Fe(2+) as cofactor.

The enzyme catalyses N-terminal N-formyl-L-methionyl-[peptide] + H2O = N-terminal L-methionyl-[peptide] + formate. Removes the formyl group from the N-terminal Met of newly synthesized proteins. Requires at least a dipeptide for an efficient rate of reaction. N-terminal L-methionine is a prerequisite for activity but the enzyme has broad specificity at other positions. The polypeptide is Peptide deformylase (Mycolicibacterium gilvum (strain PYR-GCK) (Mycobacterium gilvum (strain PYR-GCK))).